We begin with the raw amino-acid sequence, 729 residues long: Bromo and FHA domain-containing protein DDB_G0267958 (729 aa).

Positions leucine 46–threonine 79 are enriched in low complexity. Residues leucine 46–alanine 83 form a disordered region. The region spanning leucine 112 to phenylalanine 167 is the FHA domain. Composition is skewed to low complexity over residues isoleucine 208–isoleucine 221, proline 229–threonine 275, and proline 283–lysine 306. Disordered stretches follow at residues isoleucine 208–lysine 361 and serine 403–proline 442. Over residues aspartate 310–valine 341 the composition is skewed to acidic residues. Residues aspartate 315–lysine 352 are a coiled coil. Low complexity predominate over residues proline 406 to lysine 431. A Bromo domain is found at serine 498–serine 617. Residues serine 659–aspartate 718 are a coiled coil. Positions serine 659–glutamine 729 are disordered. Positions glutamine 668–glutamine 729 are enriched in acidic residues.

The polypeptide is Bromo and FHA domain-containing protein DDB_G0267958 (Dictyostelium discoideum (Social amoeba)).